The sequence spans 231 residues: Casein kinase II subunit beta (231 aa).

The protein belongs to the casein kinase 2 subunit beta family. Tetramer composed of two alpha chains, one beta chain and one beta' chain. In terms of processing, phosphorylated by alpha subunit.

Its function is as follows. Regulatory subunit of casein kinase II/CK2. As part of the kinase complex regulates the basal catalytic activity of the alpha subunit a constitutively active serine/threonine-protein kinase that phosphorylates a large number of substrates containing acidic residues C-terminal to the phosphorylated serine or threonine. The chain is Casein kinase II subunit beta from Schizosaccharomyces pombe (strain 972 / ATCC 24843) (Fission yeast).